A 353-amino-acid polypeptide reads, in one-letter code: Phosphate acyltransferase (353 aa).

Belongs to the PlsX family. As to quaternary structure, homodimer. Probably interacts with PlsY.

Its subcellular location is the cytoplasm. It carries out the reaction a fatty acyl-[ACP] + phosphate = an acyl phosphate + holo-[ACP]. It participates in lipid metabolism; phospholipid metabolism. Catalyzes the reversible formation of acyl-phosphate (acyl-PO(4)) from acyl-[acyl-carrier-protein] (acyl-ACP). This enzyme utilizes acyl-ACP as fatty acyl donor, but not acyl-CoA. This Rhodopseudomonas palustris (strain BisB5) protein is Phosphate acyltransferase.